The following is a 93-amino-acid chain: MTDSEHVGKTCQIDVLIEEHDERTRAKARLSWAGRQMVGVGLARLDPADEPVAQIGDELAIARALSDLANQLFALTSSDIEASTHQPVTGLHH.

It to M.tuberculosis Rv1738.

This is an uncharacterized protein from Mycobacterium tuberculosis (strain CDC 1551 / Oshkosh).